The chain runs to 254 residues: Tryptophan synthase alpha chain (254 aa).

Residues E48 and D59 each act as proton acceptor in the active site.

It belongs to the TrpA family. In terms of assembly, tetramer of two alpha and two beta chains.

The catalysed reaction is (1S,2R)-1-C-(indol-3-yl)glycerol 3-phosphate + L-serine = D-glyceraldehyde 3-phosphate + L-tryptophan + H2O. It participates in amino-acid biosynthesis; L-tryptophan biosynthesis; L-tryptophan from chorismate: step 5/5. The alpha subunit is responsible for the aldol cleavage of indoleglycerol phosphate to indole and glyceraldehyde 3-phosphate. The protein is Tryptophan synthase alpha chain of Desulfotalea psychrophila (strain LSv54 / DSM 12343).